Here is a 483-residue protein sequence, read N- to C-terminus: Regulatory protein ViaA (483 aa).

Belongs to the ViaA family. As to quaternary structure, homodimer. Interacts with RavA.

It localises to the cytoplasm. In terms of biological role, component of the RavA-ViaA chaperone complex, which may act on the membrane to optimize the function of some of the respiratory chains. ViaA stimulates the ATPase activity of RavA. The sequence is that of Regulatory protein ViaA from Shigella flexneri serotype 5b (strain 8401).